The chain runs to 284 residues: Bifunctional protein FolD (284 aa).

Residue 166-168 (GAS) participates in NADP(+) binding.

It belongs to the tetrahydrofolate dehydrogenase/cyclohydrolase family. In terms of assembly, homodimer.

The catalysed reaction is (6R)-5,10-methylene-5,6,7,8-tetrahydrofolate + NADP(+) = (6R)-5,10-methenyltetrahydrofolate + NADPH. It carries out the reaction (6R)-5,10-methenyltetrahydrofolate + H2O = (6R)-10-formyltetrahydrofolate + H(+). It participates in one-carbon metabolism; tetrahydrofolate interconversion. In terms of biological role, catalyzes the oxidation of 5,10-methylenetetrahydrofolate to 5,10-methenyltetrahydrofolate and then the hydrolysis of 5,10-methenyltetrahydrofolate to 10-formyltetrahydrofolate. This is Bifunctional protein FolD from Legionella pneumophila (strain Corby).